We begin with the raw amino-acid sequence, 276 residues long: Glucosamine-6-phosphate deaminase 2 (276 aa).

The active-site Proton acceptor; for enolization step is the aspartate 72. The stretch at 103-131 forms a coiled coil; that stretch reads NAHILDGNAADLQAECDAFEEKIKEAGGI. Residue aspartate 141 is the For ring-opening step of the active site. Histidine 143 (proton acceptor; for ring-opening step) is an active-site residue. Glutamate 148 serves as the catalytic For ring-opening step. Phosphothreonine is present on threonine 161.

This sequence belongs to the glucosamine/galactosamine-6-phosphate isomerase family. In terms of assembly, homohexamer.

The protein localises to the cytoplasm. The catalysed reaction is alpha-D-glucosamine 6-phosphate + H2O = beta-D-fructose 6-phosphate + NH4(+). It participates in nucleotide-sugar biosynthesis; UDP-N-acetyl-alpha-D-glucosamine biosynthesis; alpha-D-glucosamine 6-phosphate from D-fructose 6-phosphate: step 1/1. Allosterically activated by N-acetylglucosamine-6-phosphate (GlcNAc6P). Its function is as follows. Catalyzes the reversible conversion of alpha-D-glucosamine 6-phosphate (GlcN-6P) into beta-D-fructose 6-phosphate (Fru-6P) and ammonium ion, a regulatory reaction step in de novo uridine diphosphate-N-acetyl-alpha-D-glucosamine (UDP-GlcNAc) biosynthesis via hexosamine pathway. Deamination is coupled to aldo-keto isomerization mediating the metabolic flux from UDP-GlcNAc toward Fru-6P. At high ammonium level can drive amination and isomerization of Fru-6P toward hexosamines and UDP-GlcNAc synthesis. Has a role in fine tuning the metabolic fluctuations of cytosolic UDP-GlcNAc and their effects on hyaluronan synthesis that occur during tissue remodeling. This Mus musculus (Mouse) protein is Glucosamine-6-phosphate deaminase 2.